Here is a 314-residue protein sequence, read N- to C-terminus: Aspartate carbamoyltransferase catalytic subunit (314 aa).

Residues Arg58 and Thr59 each coordinate carbamoyl phosphate. L-aspartate is bound at residue Lys86. The carbamoyl phosphate site is built by Arg108, His136, and Gln139. Residues Arg169 and Arg223 each coordinate L-aspartate. 2 residues coordinate carbamoyl phosphate: Gly264 and Pro265.

The protein belongs to the aspartate/ornithine carbamoyltransferase superfamily. ATCase family. As to quaternary structure, heterododecamer (2C3:3R2) of six catalytic PyrB chains organized as two trimers (C3), and six regulatory PyrI chains organized as three dimers (R2).

It carries out the reaction carbamoyl phosphate + L-aspartate = N-carbamoyl-L-aspartate + phosphate + H(+). It participates in pyrimidine metabolism; UMP biosynthesis via de novo pathway; (S)-dihydroorotate from bicarbonate: step 2/3. In terms of biological role, catalyzes the condensation of carbamoyl phosphate and aspartate to form carbamoyl aspartate and inorganic phosphate, the committed step in the de novo pyrimidine nucleotide biosynthesis pathway. The chain is Aspartate carbamoyltransferase catalytic subunit from Jannaschia sp. (strain CCS1).